Here is a 127-residue protein sequence, read N- to C-terminus: Small ribosomal subunit protein uS11 (127 aa).

The protein belongs to the universal ribosomal protein uS11 family. In terms of assembly, part of the 30S ribosomal subunit. Interacts with proteins S7 and S18. Binds to IF-3.

Located on the platform of the 30S subunit, it bridges several disparate RNA helices of the 16S rRNA. Forms part of the Shine-Dalgarno cleft in the 70S ribosome. The polypeptide is Small ribosomal subunit protein uS11 (Prosthecochloris aestuarii (strain DSM 271 / SK 413)).